Reading from the N-terminus, the 144-residue chain is Large ribosomal subunit protein uL11 (144 aa).

It belongs to the universal ribosomal protein uL11 family. In terms of assembly, part of the ribosomal stalk of the 50S ribosomal subunit. Interacts with L10 and the large rRNA to form the base of the stalk. L10 forms an elongated spine to which L12 dimers bind in a sequential fashion forming a multimeric L10(L12)X complex. In terms of processing, one or more lysine residues are methylated.

Functionally, forms part of the ribosomal stalk which helps the ribosome interact with GTP-bound translation factors. This Polaromonas naphthalenivorans (strain CJ2) protein is Large ribosomal subunit protein uL11.